The following is a 350-amino-acid chain: 2,5-dihydroxypyridine 5,6-dioxygenase (350 aa).

H265, H318, and D320 together coordinate Fe cation.

The cofactor is Fe(2+).

It carries out the reaction 2,5-dihydroxypyridine + O2 = N-formylmaleamate + H(+). It functions in the pathway cofactor degradation; nicotinate degradation. Catalyzes the dioxygenolytic ring cleavage of 2,5-dihydroxypyridine between carbons 5 and 6 generating N-formylmaleamate in the aerobic nicotinate degradation pathway. The protein is 2,5-dihydroxypyridine 5,6-dioxygenase (nicX) of Pseudomonas putida (strain ATCC 47054 / DSM 6125 / CFBP 8728 / NCIMB 11950 / KT2440).